The sequence spans 901 residues: Protein translocase subunit SecA (901 aa).

ATP is bound by residues glutamine 87, glycine 105–threonine 109, and aspartate 512. A disordered region spans residues glutamine 839–alanine 901. Over residues glutamate 841–arginine 850 the composition is skewed to basic and acidic residues. Zn(2+)-binding residues include cysteine 885, cysteine 887, cysteine 896, and histidine 897. The span at lysine 891 to alanine 901 shows a compositional bias: basic residues.

This sequence belongs to the SecA family. Monomer and homodimer. Part of the essential Sec protein translocation apparatus which comprises SecA, SecYEG and auxiliary proteins SecDF-YajC and YidC. Zn(2+) is required as a cofactor.

The protein resides in the cell inner membrane. Its subcellular location is the cytoplasm. It catalyses the reaction ATP + H2O + cellular proteinSide 1 = ADP + phosphate + cellular proteinSide 2.. Its function is as follows. Part of the Sec protein translocase complex. Interacts with the SecYEG preprotein conducting channel. Has a central role in coupling the hydrolysis of ATP to the transfer of proteins into and across the cell membrane, serving both as a receptor for the preprotein-SecB complex and as an ATP-driven molecular motor driving the stepwise translocation of polypeptide chains across the membrane. The chain is Protein translocase subunit SecA from Erwinia tasmaniensis (strain DSM 17950 / CFBP 7177 / CIP 109463 / NCPPB 4357 / Et1/99).